Consider the following 109-residue polypeptide: Guanylate cyclase activator 2B (109 aa).

An N-terminal signal peptide occupies residues 1-23 (MKVLALPVAVAAMLLVLAQNTQS). The propeptide occupies 24–94 (VYIQYEGFQV…NIFRALRSIS (71 aa)). Cystine bridges form between Cys-65/Cys-78, Cys-98/Cys-106, and Cys-101/Cys-109.

Belongs to the guanylin family. Small and large intestine and atria and ventricles of heart. Both uroguanylin and prouroguanylin are found in plasma.

The protein localises to the secreted. Functionally, endogenous activator of intestinal guanylate cyclase. It stimulates this enzyme through the same receptor binding region as the heat-stable enterotoxins. May be a potent physiological regulator of intestinal fluid and electrolyte transport. May be an autocrine/paracrine regulator of intestinal salt and water transport. The protein is Guanylate cyclase activator 2B (GUCA2B) of Didelphis virginiana (North American opossum).